We begin with the raw amino-acid sequence, 293 residues long: Aromatic amino acid exporter YddG (293 aa).

The Cytoplasmic segment spans residues 1–6 (MTSQKA). Residues 7–27 (TLIGLVAIVLWSTMVGLIRGV) traverse the membrane as a helical segment. One can recognise an EamA 1 domain in the interval 15–137 (VLWSTMVGLI…IALTGVCWVL (123 aa)). The Periplasmic segment spans residues 28 to 33 (SEGLGP). A helical membrane pass occupies residues 34-54 (VGGAAMIYSLSGLLLIFTVGL). Residues 55-63 (PDIRRFPGR) lie on the Cytoplasmic side of the membrane. Residues 64–84 (YLIAGSVLFVSYEICLALSLG) traverse the membrane as a helical segment. Topologically, residues 85-92 (YAATRHQA) are periplasmic. The helical transmembrane segment at 93–113 (IEVGMVNYLWPSLTILFAILF) threads the bilayer. Over 114–119 (NGQKTN) the chain is Cytoplasmic. Residues 120-140 (WLIVPGLLIALTGVCWVLGGE) form a helical membrane-spanning segment. At 141–147 (NGLNPGE) the chain is on the periplasmic side. Residues 148-168 (IISNVATSPLSYLLAFLGAFI) traverse the membrane as a helical segment. The 119-residue stretch at 167–285 (FIWATYCTVT…AVMVCVGSLL (119 aa)) folds into the EamA 2 domain. Over 169-182 (WATYCTVTNKYARG) the chain is Cytoplasmic. A helical membrane pass occupies residues 183–203 (FNGITVFVLLTAVALWLHYFL). Residues 204-207 (TPQP) lie on the Periplasmic side of the membrane. Residues 208 to 228 (AMIFSLPVIAKLFTAALTLGF) traverse the membrane as a helical segment. Over 229–243 (AYAAWNVGILHGNVT) the chain is Cytoplasmic. Residues 244–264 (IMAVGSYFTPVMSSALAALLL) form a helical membrane-spanning segment. Residues 265–267 (SSP) lie on the Periplasmic side of the membrane. A helical transmembrane segment spans residues 268–288 (LSFSFWQGAVMVCVGSLLCWL). At 289–293 (ATRRR) the chain is on the cytoplasmic side.

This sequence belongs to the drug/metabolite transporter (DMT) superfamily. Aromatic amino acid/paraquat exporter (ArAA/P-E) (TC 2.A.7.17) family.

The protein localises to the cell inner membrane. Amino acid transporter with broad substrate specificity. Required for resistance to methyl viologen. May function with OmpD porin. The sequence is that of Aromatic amino acid exporter YddG (yddG) from Salmonella typhimurium (strain 14028s / SGSC 2262).